A 355-amino-acid polypeptide reads, in one-letter code: UDP-N-acetylglucosamine--N-acetylmuramyl-(pentapeptide) pyrophosphoryl-undecaprenol N-acetylglucosamine transferase (355 aa).

UDP-N-acetyl-alpha-D-glucosamine-binding positions include 15–17 (TGG), N127, R163, S191, I244, 263–268 (ALTVSE), and Q288.

It belongs to the glycosyltransferase 28 family. MurG subfamily.

It is found in the cell inner membrane. The enzyme catalyses di-trans,octa-cis-undecaprenyl diphospho-N-acetyl-alpha-D-muramoyl-L-alanyl-D-glutamyl-meso-2,6-diaminopimeloyl-D-alanyl-D-alanine + UDP-N-acetyl-alpha-D-glucosamine = di-trans,octa-cis-undecaprenyl diphospho-[N-acetyl-alpha-D-glucosaminyl-(1-&gt;4)]-N-acetyl-alpha-D-muramoyl-L-alanyl-D-glutamyl-meso-2,6-diaminopimeloyl-D-alanyl-D-alanine + UDP + H(+). It participates in cell wall biogenesis; peptidoglycan biosynthesis. Cell wall formation. Catalyzes the transfer of a GlcNAc subunit on undecaprenyl-pyrophosphoryl-MurNAc-pentapeptide (lipid intermediate I) to form undecaprenyl-pyrophosphoryl-MurNAc-(pentapeptide)GlcNAc (lipid intermediate II). The protein is UDP-N-acetylglucosamine--N-acetylmuramyl-(pentapeptide) pyrophosphoryl-undecaprenol N-acetylglucosamine transferase of Citrobacter koseri (strain ATCC BAA-895 / CDC 4225-83 / SGSC4696).